The following is a 69-amino-acid chain: A-kinase anchor protein inhibitor 1 (69 aa).

Residues 39–69 form a disordered region; the sequence is QESLRREGRPGDSRAWGQLGGCELTKKHEKK. The span at 41–50 shows a compositional bias: basic and acidic residues; sequence SLRREGRPGD.

Binds cAMP-dependent protein kinase (PKA). Interacts specifically with RII-regulatory subunits of PKA (PRKAR2A and PRKAR2B). Preferentially expressed in the neural tissues.

Its function is as follows. Protein kinase A (PKA)-binding protein. Binds to type II regulatory subunits of protein kinase A (PKA) and may block the A-kinase anchoring protein (AKAP)-mediated subcellular localization of PKA. This is A-kinase anchor protein inhibitor 1 from Mus musculus (Mouse).